A 263-amino-acid chain; its full sequence is Small ribosomal subunit protein uS2 (263 aa).

Residues G230–L249 show a composition bias toward basic and acidic residues. The interval G230–E263 is disordered. Over residues D250 to E263 the composition is skewed to acidic residues.

Belongs to the universal ribosomal protein uS2 family.

The protein is Small ribosomal subunit protein uS2 of Campylobacter jejuni subsp. jejuni serotype O:2 (strain ATCC 700819 / NCTC 11168).